The chain runs to 542 residues: Monocarboxylate transporter 3 (542 aa).

The Cytoplasmic portion of the chain corresponds to Met-1–Asp-19. The chain crosses the membrane as a helical span at residues Gly-20–Phe-40. The Extracellular portion of the chain corresponds to Pro-41–Ala-63. The chain crosses the membrane as a helical span at residues Trp-64 to Val-84. Over Asn-85–Met-93 the chain is Cytoplasmic. The chain crosses the membrane as a helical span at residues Leu-94 to Ile-114. The Extracellular portion of the chain corresponds to Glu-115 to Thr-119. Residues Ala-120–Gly-140 traverse the membrane as a helical segment. The Cytoplasmic portion of the chain corresponds to Thr-141–Gly-152. The helical transmembrane segment at Leu-153–Leu-173 threads the bilayer. Residues Glu-174–Gly-181 lie on the Extracellular side of the membrane. Residues Phe-182–Leu-202 traverse the membrane as a helical segment. The Cytoplasmic segment spans residues Asp-203–Gly-265. The disordered stretch occupies residues Gly-226 to Lys-247. Residues Phe-266–Leu-286 traverse the membrane as a helical segment. At Leu-287 to Ala-301 the chain is on the extracellular side. A helical membrane pass occupies residues Ala-302–Val-322. At Ala-323–Pro-330 the chain is on the cytoplasmic side. The helical transmembrane segment at His-331–Ala-351 threads the bilayer. Over Arg-352 to Thr-357 the chain is Extracellular. The chain crosses the membrane as a helical span at residues Gly-358–Phe-378. Residues Glu-379 to Ser-392 are Cytoplasmic-facing. A helical transmembrane segment spans residues Ala-393–Gly-413. At Arg-414–Glu-423 the chain is on the extracellular side. A helical transmembrane segment spans residues Val-424 to Thr-444. Topologically, residues Tyr-445 to Phe-542 are cytoplasmic. Positions Lys-453–Phe-542 are disordered. Basolateral sorting signal regions lie at residues Gly-465–Glu-510 and Gln-511–Asn-532. A compositionally biased stretch (acidic residues) spans Asp-468 to Glu-478.

The protein belongs to the major facilitator superfamily. Monocarboxylate porter (TC 2.A.1.13) family. In terms of tissue distribution, retinal pigment epithelium.

The protein localises to the basolateral cell membrane. The catalysed reaction is (S)-lactate(in) + H(+)(in) = (S)-lactate(out) + H(+)(out). In terms of biological role, probable retinal pigment epithelium (RPE)-specific proton-coupled L-lactate transporter. May facilitate transport of lactate and H(+) out of the retina and could therefore play a role in pH and ion homeostasis of the outer retina. This is Monocarboxylate transporter 3 (SLC16A8) from Gallus gallus (Chicken).